The primary structure comprises 1077 residues: FKBP12-associated protein 1 homolog (1077 aa).

The interval 1–173 (METSKNPSDL…MPKNSKEIKK (173 aa)) is disordered. The segment covering 15–29 (ANVKKNRRRFQKSQK) has biased composition (basic residues). Residue serine 33 is modified to Phosphoserine. Over residues 52-64 (EEVKTSLKEDSSK) the composition is skewed to basic and acidic residues. The span at 76–87 (PTSSVQLNVSKN) shows a compositional bias: polar residues. A compositionally biased stretch (basic and acidic residues) spans 100–116 (SSKDEELRKHAKGEGKR). Positions 136 to 149 (SSNSSQETSSSKGS) are enriched in low complexity. Residues 153 to 173 (KSERSREAKSRMPKNSKEIKK) are compositionally biased toward basic and acidic residues. The RING-type; atypical zinc finger occupies 197–247 (CSVCTDTINPSTSIWSCGTCYHVFHLSCIRKWCKNSIEQRNEDAWRCPYCQ). NF-X1-type zinc fingers lie at residues 290–308 (CEHP…PCTA), 348–367 (CGEH…ACFE), 420–441 (CGLH…HCPF), 485–503 (CGHR…TCSE), 541–558 (CGRH…SKAQ), 595–614 (CGNH…RCLE), 708–729 (CKTH…SCKK), and 738–760 (CEHV…PCKA). The region spanning 835–897 (SDFADEVESL…KRNVMVYNKG (63 aa)) is the R3H domain.

Belongs to the NFX1 family.

The protein resides in the cytoplasm. Its subcellular location is the golgi apparatus. It is found in the nucleus. In terms of biological role, may play a role in transcription regulation. This chain is FKBP12-associated protein 1 homolog (fap1), found in Schizosaccharomyces pombe (strain 972 / ATCC 24843) (Fission yeast).